The primary structure comprises 147 residues: Small ribosomal subunit protein uS12 (147 aa).

Belongs to the universal ribosomal protein uS12 family. In terms of assembly, part of the 30S ribosomal subunit.

In terms of biological role, with S4 and S5 plays an important role in translational accuracy. Located at the interface of the 30S and 50S subunits. The protein is Small ribosomal subunit protein uS12 of Pyrococcus abyssi (strain GE5 / Orsay).